Here is a 458-residue protein sequence, read N- to C-terminus: Bifunctional protein GlmU (458 aa).

The tract at residues 1-230 is pyrophosphorylase; that stretch reads MLQIDVVILA…DWEVVGVNDK (230 aa). UDP-N-acetyl-alpha-D-glucosamine-binding positions include 9 to 12, K23, Q75, and 80 to 81; these read LAAG and GT. Residue D104 participates in Mg(2+) binding. 4 residues coordinate UDP-N-acetyl-alpha-D-glucosamine: G139, E155, N170, and N228. Mg(2+) is bound at residue N228. The linker stretch occupies residues 231–251; that stretch reads IQLSTLERAHQQDVAKGLMEQ. The tract at residues 252–458 is N-acetyltransferase; that stretch reads GVMFADPARF…NWKRPKKNKD (207 aa). Positions 334 and 352 each coordinate UDP-N-acetyl-alpha-D-glucosamine. H364 acts as the Proton acceptor in catalysis. Residues Y367 and N378 each coordinate UDP-N-acetyl-alpha-D-glucosamine. Acetyl-CoA is bound by residues A381, 387–388, S406, A424, and R441; that span reads NY.

It in the N-terminal section; belongs to the N-acetylglucosamine-1-phosphate uridyltransferase family. The protein in the C-terminal section; belongs to the transferase hexapeptide repeat family. Homotrimer. It depends on Mg(2+) as a cofactor.

The protein resides in the cytoplasm. It catalyses the reaction alpha-D-glucosamine 1-phosphate + acetyl-CoA = N-acetyl-alpha-D-glucosamine 1-phosphate + CoA + H(+). It carries out the reaction N-acetyl-alpha-D-glucosamine 1-phosphate + UTP + H(+) = UDP-N-acetyl-alpha-D-glucosamine + diphosphate. Its pathway is nucleotide-sugar biosynthesis; UDP-N-acetyl-alpha-D-glucosamine biosynthesis; N-acetyl-alpha-D-glucosamine 1-phosphate from alpha-D-glucosamine 6-phosphate (route II): step 2/2. It participates in nucleotide-sugar biosynthesis; UDP-N-acetyl-alpha-D-glucosamine biosynthesis; UDP-N-acetyl-alpha-D-glucosamine from N-acetyl-alpha-D-glucosamine 1-phosphate: step 1/1. The protein operates within bacterial outer membrane biogenesis; LPS lipid A biosynthesis. Its function is as follows. Catalyzes the last two sequential reactions in the de novo biosynthetic pathway for UDP-N-acetylglucosamine (UDP-GlcNAc). The C-terminal domain catalyzes the transfer of acetyl group from acetyl coenzyme A to glucosamine-1-phosphate (GlcN-1-P) to produce N-acetylglucosamine-1-phosphate (GlcNAc-1-P), which is converted into UDP-GlcNAc by the transfer of uridine 5-monophosphate (from uridine 5-triphosphate), a reaction catalyzed by the N-terminal domain. This is Bifunctional protein GlmU from Nitrosomonas eutropha (strain DSM 101675 / C91 / Nm57).